The sequence spans 494 residues: UDP-N-acetylmuramoyl-L-alanyl-D-glutamate--L-lysine ligase (494 aa).

S30 contributes to the UDP-N-acetyl-alpha-D-muramoyl-L-alanyl-D-glutamate binding site. 110–116 (GTNGKTS) lines the ATP pocket. UDP-N-acetyl-alpha-D-muramoyl-L-alanyl-D-glutamate-binding positions include 152-153 (TT), S179, and R187. At K219 the chain carries N6-carboxylysine. The L-lysine recognition motif motif lies at 406-409 (DNPA).

Belongs to the MurCDEF family. MurE subfamily. In terms of processing, carboxylation is probably crucial for Mg(2+) binding and, consequently, for the gamma-phosphate positioning of ATP.

Its subcellular location is the cytoplasm. It catalyses the reaction UDP-N-acetyl-alpha-D-muramoyl-L-alanyl-D-glutamate + L-lysine + ATP = UDP-N-acetyl-alpha-D-muramoyl-L-alanyl-gamma-D-glutamyl-L-lysine + ADP + phosphate + H(+). It functions in the pathway cell wall biogenesis; peptidoglycan biosynthesis. Catalyzes the addition of L-lysine to the nucleotide precursor UDP-N-acetylmuramoyl-L-alanyl-D-glutamate (UMAG) in the biosynthesis of bacterial cell-wall peptidoglycan. The chain is UDP-N-acetylmuramoyl-L-alanyl-D-glutamate--L-lysine ligase from Staphylococcus aureus (strain bovine RF122 / ET3-1).